A 264-amino-acid polypeptide reads, in one-letter code: 3-methyl-2-oxobutanoate hydroxymethyltransferase (264 aa).

Residues Asp-45 and Asp-84 each contribute to the Mg(2+) site. 3-methyl-2-oxobutanoate contacts are provided by residues 45–46, Asp-84, and Lys-112; that span reads DS. Residue Glu-114 coordinates Mg(2+). The active-site Proton acceptor is Glu-181.

Belongs to the PanB family. Homodecamer; pentamer of dimers. The cofactor is Mg(2+).

It localises to the cytoplasm. The catalysed reaction is 3-methyl-2-oxobutanoate + (6R)-5,10-methylene-5,6,7,8-tetrahydrofolate + H2O = 2-dehydropantoate + (6S)-5,6,7,8-tetrahydrofolate. Its pathway is cofactor biosynthesis; (R)-pantothenate biosynthesis; (R)-pantoate from 3-methyl-2-oxobutanoate: step 1/2. Catalyzes the reversible reaction in which hydroxymethyl group from 5,10-methylenetetrahydrofolate is transferred onto alpha-ketoisovalerate to form ketopantoate. The chain is 3-methyl-2-oxobutanoate hydroxymethyltransferase from Shigella sonnei (strain Ss046).